Here is a 325-residue protein sequence, read N- to C-terminus: tRNA(Ile)-lysidine synthase (325 aa).

34 to 39 serves as a coordination point for ATP; it reads SGGQDS.

Belongs to the tRNA(Ile)-lysidine synthase family.

The protein localises to the cytoplasm. It carries out the reaction cytidine(34) in tRNA(Ile2) + L-lysine + ATP = lysidine(34) in tRNA(Ile2) + AMP + diphosphate + H(+). Its function is as follows. Ligates lysine onto the cytidine present at position 34 of the AUA codon-specific tRNA(Ile) that contains the anticodon CAU, in an ATP-dependent manner. Cytidine is converted to lysidine, thus changing the amino acid specificity of the tRNA from methionine to isoleucine. This chain is tRNA(Ile)-lysidine synthase, found in Synechococcus sp. (strain ATCC 27144 / PCC 6301 / SAUG 1402/1) (Anacystis nidulans).